The primary structure comprises 100 residues: NADH-quinone oxidoreductase subunit K (100 aa).

3 helical membrane-spanning segments follow: residues 4–24 (LSHG…SLVM), 28–48 (ILFM…ALVV), and 60–80 (IMYI…LALL).

Belongs to the complex I subunit 4L family. As to quaternary structure, NDH-1 is composed of 13 different subunits. Subunits NuoA, H, J, K, L, M, N constitute the membrane sector of the complex.

Its subcellular location is the cell membrane. It catalyses the reaction a quinone + NADH + 5 H(+)(in) = a quinol + NAD(+) + 4 H(+)(out). NDH-1 shuttles electrons from NADH, via FMN and iron-sulfur (Fe-S) centers, to quinones in the respiratory chain. The immediate electron acceptor for the enzyme in this species is believed to be ubiquinone. Couples the redox reaction to proton translocation (for every two electrons transferred, four hydrogen ions are translocated across the cytoplasmic membrane), and thus conserves the redox energy in a proton gradient. This Buchnera aphidicola subsp. Baizongia pistaciae (strain Bp) protein is NADH-quinone oxidoreductase subunit K.